We begin with the raw amino-acid sequence, 881 residues long: Translation initiation factor IF-2 (881 aa).

2 disordered regions span residues 31–147 (KLAQ…TKVP) and 165–291 (SVVG…HYDE). Over residues 42-55 (NSSEKPSAKVAEKV) the composition is skewed to basic and acidic residues. Over residues 68–77 (ATPESVSSET) the composition is skewed to polar residues. Acidic residues predominate over residues 114–128 (VEEEIASSTDSEPEV). A compositionally biased stretch (basic and acidic residues) spans 191–203 (PKKEDKPAPKERS). Polar residues predominate over residues 204–233 (GQAQAKPQQSSEASSENKPHSPNNNRSSQP). Residues 235–267 (YRRDTSKKPGSDFRDRAKKDDNPKAFTGRDRYG) show a composition bias toward basic and acidic residues. The segment covering 278 to 287 (RKKRVQKTKK) has biased composition (basic residues). Residues 387 to 556 (IRPPIVAFMG…ALQAEVLELK (170 aa)) enclose the tr-type G domain. The G1 stretch occupies residues 396–403 (GHVDHGKT). 396 to 403 (GHVDHGKT) serves as a coordination point for GTP. Positions 421 to 425 (AITQH) are G2. The interval 442–445 (DTPG) is G3. GTP-binding positions include 442–446 (DTPGH) and 496–499 (NKCD). The segment at 496–499 (NKCD) is G4. Residues 532–534 (SAK) are G5.

The protein belongs to the TRAFAC class translation factor GTPase superfamily. Classic translation factor GTPase family. IF-2 subfamily.

The protein localises to the cytoplasm. One of the essential components for the initiation of protein synthesis. Protects formylmethionyl-tRNA from spontaneous hydrolysis and promotes its binding to the 30S ribosomal subunits. Also involved in the hydrolysis of GTP during the formation of the 70S ribosomal complex. This chain is Translation initiation factor IF-2, found in Chlamydia felis (strain Fe/C-56) (Chlamydophila felis).